The chain runs to 75 residues: Exodeoxyribonuclease 7 small subunit (75 aa).

It belongs to the XseB family. Heterooligomer composed of large and small subunits.

It localises to the cytoplasm. It catalyses the reaction Exonucleolytic cleavage in either 5'- to 3'- or 3'- to 5'-direction to yield nucleoside 5'-phosphates.. Bidirectionally degrades single-stranded DNA into large acid-insoluble oligonucleotides, which are then degraded further into small acid-soluble oligonucleotides. The chain is Exodeoxyribonuclease 7 small subunit from Chlamydia felis (strain Fe/C-56) (Chlamydophila felis).